Reading from the N-terminus, the 637-residue chain is BUD13 homolog (637 aa).

A disordered region spans residues 18–53 (SGTDAGLEGGPEAGRKRRKKRPKPGGAGGKGMRIVD). Residue Lys65 forms a Glycyl lysine isopeptide (Lys-Gly) (interchain with G-Cter in SUMO2) linkage. The segment at 104–470 (LLGGHGEDGH…KKQDQDTTDL (367 aa)) is disordered. Positions 108–119 (HGEDGHFHHDDQ) are enriched in basic and acidic residues. The residue at position 131 (Thr131) is a Phosphothreonine. Ser135 carries the phosphoserine modification. At Thr144 the chain carries Phosphothreonine. At Ser148 the chain carries Phosphoserine. Thr157 is subject to Phosphothreonine. Position 161 is a phosphoserine (Ser161). Thr170 is modified (phosphothreonine). A Phosphoserine modification is found at Ser174. Thr183 carries the phosphothreonine modification. Phosphoserine is present on Ser187. Thr196 and Thr209 each carry phosphothreonine. Phosphoserine is present on Ser213. Residue Thr222 is modified to Phosphothreonine. Phosphoserine occurs at positions 226, 238, 259, 264, 272, 284, 285, and 297. Over residues 260-275 (LGTSSPRQTHNHSPTA) the composition is skewed to polar residues. The segment covering 295–315 (HESPDLELHKAKSSKAAERAP) has biased composition (basic and acidic residues). Residues 318-335 (AASQSGLGPSHPSLSTNS) show a composition bias toward polar residues. 2 positions are modified to phosphoserine: Ser341 and Ser344. Positions 353 to 362 (AHFEAKKQLD) are enriched in basic and acidic residues. Ser371, Ser373, Ser376, Ser410, and Ser426 each carry phosphoserine. Residues 430-439 (RSPRPGKKTA) show a composition bias toward basic residues. The segment covering 453–465 (VQREHQELKKQDQ) has biased composition (basic and acidic residues). Residues 490–538 (NLKLERLEQRRKAEKDSERDELYAQWGKGLAQSRQQQQNVEDAMKEMQK) adopt a coiled-coil conformation. Residue Tyr512 is modified to Phosphotyrosine. Residues 553–595 (LREQEREGDPMANFIKKNKAKENKNKKVKPRYSGPAPPPNRFN) form a disordered region. At Ser585 the chain carries Phosphoserine.

This sequence belongs to the CWC26 family. Part of the activated spliceosome B/catalytic step 1 spliceosome, one of the forms of the spliceosome which has a well-formed active site but still cannot catalyze the branching reaction and is composed of at least 52 proteins, the U2, U5 and U6 snRNAs and the pre-mRNA. Component of the minor spliceosome, which splices U12-type introns.

It is found in the nucleus. Involved in pre-mRNA splicing as component of the activated spliceosome. As a component of the minor spliceosome, involved in the splicing of U12-type introns in pre-mRNAs. The polypeptide is BUD13 homolog (Bud13) (Mus musculus (Mouse)).